A 385-amino-acid polypeptide reads, in one-letter code: Guanine nucleotide-binding protein alpha-5 subunit (385 aa).

G2 is lipidated: N-myristoyl glycine. C6 carries the S-palmitoyl cysteine lipid modification. Residues 32-385 (RKIKMLLLGI…NKNIETLSLE (354 aa)) form the G-alpha domain. The tract at residues 35 to 48 (KMLLLGISDSGKST) is G1 motif. GTP-binding positions include 40-47 (GISDSGKS), 174-180 (IHMRQTT), 199-203 (DVGGQ), 298-301 (NKID), and A357. Residues S47 and T180 each coordinate Mg(2+). The tract at residues 172 to 180 (DLIHMRQTT) is G2 motif. Positions 195 to 204 (IRLIDVGGQK) are G3 motif. Positions 294–301 (MLFLNKID) are G4 motif. The G5 motif stretch occupies residues 355–360 (TQATIT).

Belongs to the G-alpha family. G proteins are composed of 3 units; alpha, beta and gamma. The alpha chain contains the guanine nucleotide binding site.

Functionally, guanine nucleotide-binding proteins (G proteins) are involved as modulators or transducers in various transmembrane signaling systems. The polypeptide is Guanine nucleotide-binding protein alpha-5 subunit (gpa-5) (Caenorhabditis briggsae).